The primary structure comprises 500 residues: MKKYIVALDQGTTSSRAIIFDKEQNIIGVSQKEFNQIYPREGWVEHDPMEIWATQYSVLQEVMAKCNITQENIAAIGITNQRETTIVWDKNTGVPIYNAIVWQCRRTADICDELKERDGLVDYIRENTGLVLDAYFSGTKIKWILDNVEGAREKAEKGELLFGTVDSWLVWKLTNGKVHVTDYTNASRTMIFNIKNLEWDERMLKELDIPRSMLPEVKNSSEIYGYANLGAKGGIRVPIAGIAGDQQAALFGQAAFNKGDVKNTYGTGCFLLMNTGEELVKSKSGLLTTIAIGLHGKVQYALEGSVFVGGAVIQWLRDELRIISDSSDTEYFATKVEDNGGVYVVPAFVGLGAPYWDMYARGTIVGLTRGTNRNHIIRAALESIAYQTRDVLEAMINDVGYDINCIKVDGGASRNNFLMQFQSDLVGKKVIKPIITETTALGAAYLAGLAVGYWSDKEEIAKLWFASEEFEPTISEERRNKYHKKWKKAVERSKGWALED.

T12 is an ADP binding site. 3 residues coordinate ATP: T12, T13, and S14. T12 contributes to the sn-glycerol 3-phosphate binding site. R16 is an ADP binding site. Sn-glycerol 3-phosphate contacts are provided by R82, E83, Y135, and D245. Residues R82, E83, Y135, D245, and Q246 each contribute to the glycerol site. 2 residues coordinate ADP: T267 and G310. The ATP site is built by T267, G310, Q314, and G411. G411 and N415 together coordinate ADP.

Belongs to the FGGY kinase family. In terms of assembly, homotetramer and homodimer (in equilibrium).

The enzyme catalyses glycerol + ATP = sn-glycerol 3-phosphate + ADP + H(+). Its pathway is polyol metabolism; glycerol degradation via glycerol kinase pathway; sn-glycerol 3-phosphate from glycerol: step 1/1. With respect to regulation, activated by phosphorylation and inhibited by fructose 1,6-bisphosphate (FBP). In terms of biological role, key enzyme in the regulation of glycerol uptake and metabolism. Catalyzes the phosphorylation of glycerol to yield sn-glycerol 3-phosphate. The protein is Glycerol kinase of Clostridium perfringens (strain ATCC 13124 / DSM 756 / JCM 1290 / NCIMB 6125 / NCTC 8237 / Type A).